The chain runs to 281 residues: Probable endonuclease 4 (281 aa).

9 residues coordinate Zn(2+): H69, H109, E145, D179, H182, H216, D229, H231, and E261.

This sequence belongs to the AP endonuclease 2 family. Zn(2+) serves as cofactor.

The catalysed reaction is Endonucleolytic cleavage to 5'-phosphooligonucleotide end-products.. Functionally, endonuclease IV plays a role in DNA repair. It cleaves phosphodiester bonds at apurinic or apyrimidinic (AP) sites, generating a 3'-hydroxyl group and a 5'-terminal sugar phosphate. In Proteus mirabilis (strain HI4320), this protein is Probable endonuclease 4.